Here is a 708-residue protein sequence, read N- to C-terminus: Leukotoxin translocation ATP-binding protein LktB (708 aa).

The Peptidase C39 domain maps to 1 to 126 (MEANHQRNDL…ACYQGQLILV (126 aa)). Residues 155–437 (FLETLIVSIF…LAQLWQDFQQ (283 aa)) form the ABC transmembrane type-1 domain. 5 helical membrane passes run 159-179 (LIVS…FQVV), 192-212 (LNII…LSGL), 270-290 (ALTS…MWYY), 296-316 (LVIL…SPIL), and 389-409 (VMVI…LSIG). The ABC transporter domain occupies 469–704 (ISFKNIRFRY…SNGLYSYLHQ (236 aa)). 503–510 (GRSGSGKS) lines the ATP pocket.

The protein belongs to the ABC transporter superfamily. Protein-1 exporter (TC 3.A.1.109) family. Homodimer.

The protein localises to the cell inner membrane. It catalyses the reaction ATP + H2O + proteinSide 1 = ADP + phosphate + proteinSide 2.. In terms of biological role, part of the ABC transporter complex LktBD involved in leukotoxin export. Transmembrane domains (TMD) form a pore in the inner membrane and the ATP-binding domain (NBD) is responsible for energy generation. The sequence is that of Leukotoxin translocation ATP-binding protein LktB (lktB) from Mannheimia haemolytica (Pasteurella haemolytica).